The following is an 87-amino-acid chain: Protein ORF3 (87 aa).

The segment at 58–87 (GALNNAPREPSAPPLSQTLSPRQVLARYQM) is disordered. A PTAP/PSAP motif motif is present at residues 67–70 (PSAP).

The protein belongs to the hepevirus ORF3 protein family. In terms of processing, palmitoylated in the N-terminus.

It is found in the host endoplasmic reticulum membrane. The protein localises to the host cytoplasm. The protein resides in the host cytoskeleton. Its subcellular location is the virion. It localises to the host cell membrane. In terms of biological role, small multifunctional phosphoprotein involved in virion morphogenesis, egress and counteracting host innate immunity. The polypeptide is Protein ORF3 (Avian hepatitis E virus (isolate Chicken/California/Meng) (AHEV)).